A 277-amino-acid polypeptide reads, in one-letter code: F420-dependent methylenetetrahydromethanopterin dehydrogenase (277 aa).

The protein belongs to the MTD family.

It catalyses the reaction 5,10-methylenetetrahydromethanopterin + oxidized coenzyme F420-(gamma-L-Glu)(n) + 2 H(+) = 5,10-methenyl-5,6,7,8-tetrahydromethanopterin + reduced coenzyme F420-(gamma-L-Glu)(n). Its pathway is one-carbon metabolism; methanogenesis from CO(2); 5,10-methylene-5,6,7,8-tetrahydromethanopterin from 5,10-methenyl-5,6,7,8-tetrahydromethanopterin (coenzyme F420 route): step 1/1. Functionally, catalyzes the reversible reduction of methenyl-H(4)MPT(+) to methylene-H(4)MPT. This Methanococcus maripaludis (strain C5 / ATCC BAA-1333) protein is F420-dependent methylenetetrahydromethanopterin dehydrogenase.